The chain runs to 230 residues: Ion-translocating oxidoreductase complex subunit E (230 aa).

The next 6 helical transmembrane spans lie at 18–38 (ALVQ…ATNA), 39–59 (LGLG…VSAL), 63–83 (TPAE…VSAV), 86–106 (LINA…PLIV), 125–145 (WLSA…MFVL), and 182–202 (PFLL…MLAV).

This sequence belongs to the NqrDE/RnfAE family. As to quaternary structure, the complex is composed of six subunits: RsxA, RsxB, RsxC, RsxD, RsxE and RsxG.

Its subcellular location is the cell inner membrane. Functionally, part of a membrane-bound complex that couples electron transfer with translocation of ions across the membrane. Required to maintain the reduced state of SoxR. In Salmonella dublin (strain CT_02021853), this protein is Ion-translocating oxidoreductase complex subunit E.